The chain runs to 150 residues: UPF0260 protein PputGB1_4117 (150 aa).

This sequence belongs to the UPF0260 family.

This is UPF0260 protein PputGB1_4117 from Pseudomonas putida (strain GB-1).